The sequence spans 956 residues: GAS2-like protein 2B (956 aa).

The region spanning 23–150 is the Calponin-homology (CH) domain; sequence YAMKEDLAEW…CLLELARRAS (128 aa). Residues 191–263 enclose the GAR domain; that stretch reads CDFKNLDQMV…HYLDKHDPCH (73 aa). 2 stretches are compositionally biased toward polar residues: residues 332-353 and 381-390; these read SSSY…QTPP and DPQQLGNPQS. Disordered regions lie at residues 332 to 361, 378 to 406, 853 to 885, and 914 to 956; these read SSSY…SMSI, DTQD…ASQL, RPKI…SRNN, and VNSE…ESWV. Basic and acidic residues predominate over residues 859–868; that stretch reads RRDNRPEKKP.

The protein belongs to the GAS2 family.

Its subcellular location is the cytoplasm. It localises to the cytoskeleton. The protein resides in the cilium basal body. Functionally, together with gas2l2.L, regulates ciliary orientation and performance. The sequence is that of GAS2-like protein 2B from Xenopus laevis (African clawed frog).